Here is a 359-residue protein sequence, read N- to C-terminus: snRNA-activating protein complex subunit 2 (359 aa).

Residues 1–11 (MKPPQRRRRVP) show a composition bias toward basic residues. Disordered regions lie at residues 1–22 (MKPP…TGPT), 157–221 (NQDG…GSST), and 291–327 (TALP…SEPI).

In terms of assembly, part of the SNAPc complex composed of 5 subunits: SNAPC1, SNAPC2, SNAPC3, SNAPC4 and SNAPC5. SNAPC2 interacts with TBP and SNAPC4.

The protein localises to the nucleus. Functionally, part of the SNAPc complex required for the transcription of both RNA polymerase II and III small-nuclear RNA genes. Binds to the proximal sequence element (PSE), a non-TATA-box basal promoter element common to these 2 types of genes. Recruits TBP and BRF2 to the U6 snRNA TATA box. The sequence is that of snRNA-activating protein complex subunit 2 (Snapc2) from Mus musculus (Mouse).